We begin with the raw amino-acid sequence, 917 residues long: DNA repair endonuclease XPF (917 aa).

A helicase-like region spans residues 1–457; that stretch reads MEPGLSGERR…EVWVNVRKGD (457 aa). Leucine-zipper regions lie at residues 233-254 and 270-298; these read LNACLKELKCHNPSLEVEDLSL and LDPLWHQLGAKTKSLVQDLKILRTLLQYL. An N6-acetyllysine modification is found at Lys-289. Residues 454-479 are compositionally biased toward basic and acidic residues; sequence RKGDGPKRTTKSDKRPKAAPNKERAS. Disordered regions lie at residues 454–524 and 643–681; these read RKGD…SSPE and VPEEREGRDETNLDLARGSAALDAPTDTRKAGGQEQNGT. A Nuclear localization signal motif is present at residues 487-492; it reads KRKKQE. The span at 507–516 shows a compositional bias: basic and acidic residues; sequence EDKALEEDLC. Ser-522 carries the post-translational modification Phosphoserine. A compositionally biased stretch (basic and acidic residues) spans 643-653; it reads VPEEREGRDET. The nuclease stretch occupies residues 659–814; the sequence is RGSAALDAPT…PSPHATAELF (156 aa). Residues 684–764 form the ERCC4 domain; sequence SIVVDMREFR…RPVLLIEFDP (81 aa). Ser-765 carries the post-translational modification Phosphoserine. Positions 838–906 are hhH2, dimerization with ERCC1; that stretch reads TLPESDRYNP…QLHDFLHTAY (69 aa). An N6-acetyllysine modification is found at Lys-912.

It belongs to the XPF family. As to quaternary structure, heterodimer composed of ERCC1 and ERCC4/XPF. Interacts with SLX4/BTBD12; this interaction is direct and links the ERCC1-ERCC4/XPF complex to SLX4, which may coordinate the action of the structure-specific endonuclease during DNA repair. The cofactor is Mg(2+). Post-translationally, acetylation at Lys-912 by KAT5 promotes interaction with ERCC1 by disrupting a salt bridge between Asp-908 and Lys-912, thereby exposing a second binding site for ERCC1. Deacetylated by SIRT1.

The protein resides in the nucleus. It localises to the chromosome. In terms of biological role, catalytic component of a structure-specific DNA repair endonuclease responsible for the 5-prime incision during DNA repair, and which is essential for nucleotide excision repair (NER) and interstrand cross-link (ICL) repair. The polypeptide is DNA repair endonuclease XPF (Mus musculus (Mouse)).